Consider the following 541-residue polypeptide: Glutamyl-tRNA(Gln) amidotransferase subunit A, chloroplastic/mitochondrial (541 aa).

Catalysis depends on charge relay system residues K121 and S196. The Acyl-ester intermediate role is filled by S220.

The protein belongs to the amidase family. GatA subfamily. In terms of assembly, subunit of the heterotrimeric GatCAB amidotransferase (AdT) complex, composed of A, B and C subunits.

The protein localises to the mitochondrion. The protein resides in the plastid. It localises to the chloroplast stroma. It catalyses the reaction L-glutamyl-tRNA(Gln) + L-glutamine + ATP + H2O = L-glutaminyl-tRNA(Gln) + L-glutamate + ADP + phosphate + H(+). Allows the formation of correctly charged Gln-tRNA(Gln) through the transamidation of misacylated Glu-tRNA(Gln) in chloroplasts and mitochondria. The reaction takes place in the presence of glutamine and ATP through an activated gamma-phospho-Glu-tRNA(Gln). The polypeptide is Glutamyl-tRNA(Gln) amidotransferase subunit A, chloroplastic/mitochondrial (Sorghum bicolor (Sorghum)).